Here is a 334-residue protein sequence, read N- to C-terminus: Protein POLAR-like 1 (334 aa).

Residues 53 to 63 (IRTSSEDDHHR) show a composition bias toward basic and acidic residues. The interval 53-74 (IRTSSEDDHHRVGQFSDSPPPT) is disordered. The stretch at 273 to 300 (ETRQQEEIKELEIALDDAKQRLHLKETE) forms a coiled coil.

Its subcellular location is the cytoplasm. It localises to the cell cortex. Functionally, acts as a stomatal lineage scaffold which regulates subcellular localization and transient polarization of kinases (e.g. ASK7/BIN2 and ASK3/SK12) involved in asymmetric cell division (ACD) in a BASL-dependent manner. This is Protein POLAR-like 1 from Arabidopsis thaliana (Mouse-ear cress).